Here is a 1705-residue protein sequence, read N- to C-terminus: Rho guanine nucleotide exchange factor 28 (1705 aa).

2 disordered regions span residues 287-316 (RPEE…SAAE) and 473-524 (KKRS…ETNT). A phosphoserine mark is found at serine 313 and serine 478. Residues 501 to 510 (PGSQSSSRTG) show a composition bias toward polar residues. Position 624 is a phosphoserine (serine 624). The tract at residues 630-649 (MTSPRNKSKTKSKDAKDKEK) is disordered. The segment covering 640-649 (KSKDAKDKEK) has biased composition (basic and acidic residues). The Phorbol-ester/DAG-type zinc finger occupies 652–699 (RHQFAPGTFSGVLQCLVCDKTLLGKESLQCSNCNANVHKGCKDAAPAC). 2 stretches are compositionally biased toward polar residues: residues 710–721 (NKPQTILGNSSF) and 759–775 (VPGT…TSLE). The tract at residues 710–800 (NKPQTILGNS…ELLQSMGSSP (91 aa)) is disordered. The span at 777-791 (ESDHNSCRSRSHSDE) shows a compositional bias: basic and acidic residues. A DH domain is found at 849-1044 (KRQDVIFELM…KDMIATVDLK (196 aa)). A PH domain is found at 1086–1188 (TLLYDGLVYW…WMRRIQQAVE (103 aa)). The interval 1187 to 1207 (VESCPEEKGGRTSESDEDKRK) is disordered. A compositionally biased stretch (basic and acidic residues) spans 1191–1207 (PEEKGGRTSESDEDKRK). Residues 1295 to 1304 (AVSQSCEDSC) are interaction with PTK2/FAK1; required for regulation of axonal branching and synapse formation. The tract at residues 1312-1339 (TLSSHDVPGSPTASLVTGGREGRGCSDV) is disordered. The tract at residues 1372–1383 (IIQAIQNLTRLL) is mediates cytoplasmic retention and interaction with YWHAH. Residues 1425–1705 (QKSRDADRQH…DGAKENIVYL (281 aa)) form an interaction with microtubules region. The stretch at 1488–1525 (RSRGELDLQLQEYQHSLERLREGQRLVEREQARMRAQQ) forms a coiled coil. Residues 1496–1527 (QLQEYQHSLERLREGQRLVEREQARMRAQQSL) form an RNA-binding region. Serine 1538 carries the post-translational modification Phosphoserine. The mediates cytoplasmic retention and interaction with MAPK8IP1 stretch occupies residues 1566 to 1579 (FINEALVQMSFNTF). A disordered region spans residues 1638–1705 (PFHESSKDSC…DGAKENIVYL (68 aa)). A compositionally biased stretch (basic and acidic residues) spans 1641 to 1655 (ESSKDSCKNDLDTSH). A compositionally biased stretch (polar residues) spans 1656–1669 (TESPTPHDSNSHRP). Residues 1688–1699 (TRQDGETGDGAK) are compositionally biased toward basic and acidic residues.

In terms of assembly, homooligomer; forms cytoplasmic aggregates. Forms a complex with MAPK8 and MAPK8IP1. Interacts with RHOA. Interacts with microtubules. Interacts with YWHAE and YWHAH. Interacts with PTK2/FAK1. Interacts with NEFL. Interacts with CTNND2; prevents interaction with RHOA. Post-translationally, phosphorylated on tyrosine upon stimulation of cells by laminin.

It localises to the cytoplasm. Its subcellular location is the cell membrane. Functions as a RHOA-specific guanine nucleotide exchange factor regulating signaling pathways downstream of integrins and growth factor receptors. Functions in axonal branching, synapse formation and dendritic morphogenesis. Also functions in focal adhesion formation, cell motility and B-lymphocytes activation. May regulate NEFL expression and aggregation and play a role in apoptosis. The chain is Rho guanine nucleotide exchange factor 28 (ARHGEF28) from Homo sapiens (Human).